A 365-amino-acid polypeptide reads, in one-letter code: Homeobox protein knotted-1-like 7 (365 aa).

The segment covering 1-11 (MEELEGHRGEG) has biased composition (basic and acidic residues). Residues 1–20 (MEELEGHRGEGRLPPPPPLL) are disordered. One can recognise an ELK domain in the interval 227-247 (ALKRHLLRKYSGYLGGLRKEL). Residues 248–311 (SKKRKKGKLP…NQRKRHWKPT (64 aa)) constitute a DNA-binding region (homeobox; TALE-type).

This sequence belongs to the TALE/KNOX homeobox family.

Its subcellular location is the nucleus. Its function is as follows. Probable transcription factor that may be involved in shoot formation during embryogenesis. This Oryza sativa subsp. japonica (Rice) protein is Homeobox protein knotted-1-like 7 (OSH3).